The chain runs to 803 residues: Nucleoporin nup82 (803 aa).

Component of the nuclear pore complex (NPC). NPC constitutes the exclusive means of nucleocytoplasmic transport. NPCs allow the passive diffusion of ions and small molecules and the active, nuclear transport receptor-mediated bidirectional transport of macromolecules such as proteins, RNAs, ribonucleoparticles (RNPs), and ribosomal subunits across the nuclear envelope.

The protein resides in the nucleus. It localises to the nuclear pore complex. Its subcellular location is the nucleus membrane. Its function is as follows. Functions as a component of the nuclear pore complex (NPC). NPC components, collectively referred to as nucleoporins (NUPs), can play the role of both NPC structural components and of docking or interaction partners for transiently associated nuclear transport factors. In Schizosaccharomyces pombe (strain 972 / ATCC 24843) (Fission yeast), this protein is Nucleoporin nup82.